The following is a 338-amino-acid chain: Heat-inducible transcription repressor HrcA (338 aa).

This sequence belongs to the HrcA family.

In terms of biological role, negative regulator of class I heat shock genes (grpE-dnaK-dnaJ and groELS operons). Prevents heat-shock induction of these operons. The polypeptide is Heat-inducible transcription repressor HrcA (Nitrosomonas europaea (strain ATCC 19718 / CIP 103999 / KCTC 2705 / NBRC 14298)).